A 313-amino-acid chain; its full sequence is DDRGK domain-containing protein 1 (313 aa).

A helical transmembrane segment spans residues 1 to 28 (MVSPVVYLVVAALLVGLILFLTRGRGRA). Residues 1–113 (MVSPVVYLVV…IEKPVETHLS (113 aa)) are mediates interaction with CDK5RAP3. At 29 to 313 (AAAAQEPLHN…GRETPAQAPA (285 aa)) the chain is on the cytoplasmic side. Residues 40–88 (EVPAAAGRVARPQPLEPEEQRAAGRPRRRRDLGSRLQAQRRAQRVAWAD) form a disordered region. Phosphoserine is present on residues Ser73 and Ser113. The segment covering 73–87 (SRLQAQRRAQRVAWA) has biased composition (low complexity). The mediates interaction with TRIP4 stretch occupies residues 117–215 (GAKKLRKLEE…MTEEQSHSFL (99 aa)). The tract at residues 130–185 (RKAQREAEEAEREERKRLESQREAEWKKEEERLRLEEEQKEEEERKAQEEQAQREH) is disordered. The short motif at 194 to 208 (TFVVVEEGVGETMTE) is the UFM1-interacting motif (UFIM) element. The segment at 215–313 (LAEFINYIKQ…GRETPAQAPA (99 aa)) is mediates interaction with UFL1. A PCI domain is found at 228–272 (VLLEDLASQVGLRTQDTINRIQDLLAEGTLTGVIDDRGKFIYITP). A Glycyl lysine isopeptide (Lys-Gly) (interchain with G-Cter in UFM1) cross-link involves residue Lys266.

This sequence belongs to the DDRGK1 family. Component of the UFM1 ribosome E3 ligase (UREL) complex, composed of UFL1, DDRGK1 and CDK5RAP3. Interacts with (unphosphorylated) ERN1/IRE1-alpha; interaction is dependent on UFM1 and takes place in response to endoplasmic reticulum stress, regulating ERN1/IRE1-alpha stability. Interacts with NFKBIA. Interacts with SOX9. Post-translationally, ubiquitinated. Ubiquitination probably triggers proteasomal degradation and is negatively regulated by UFL1, the enzyme involved in the ufmylation of DDRGK1. In terms of processing, ufmylated; conjugated to ubiquitin-like protein UFM1, probably at Lys-266 by UFL1. The relevance of ufmylation is however unclear: as DDRGK1 acts as a substrate adapter for ufmylation, it is uncertain whether ufmylation is a collateral effect of the ufmylation process or whether it is required to regulate its activity.

Its subcellular location is the endoplasmic reticulum membrane. Functionally, component of the UFM1 ribosome E3 ligase (UREL) complex, a multiprotein complex that catalyzes ufmylation of endoplasmic reticulum-docked proteins. The UREL complex plays a key role in ribosome recycling by mediating mono-ufmylation of the RPL26/uL24 subunit of the 60S ribosome following ribosome dissociation: ufmylation weakens the junction between post-termination 60S subunits and SEC61 translocons, promoting release and recycling of the large ribosomal subunit from the endoplasmic reticulum membrane. Ufmylation of RPL26/uL24 and subsequent 60S ribosome recycling either take place after normal termination of translation or after ribosome stalling during cotranslational translocation at the endoplasmic reticulum. Within the UREL complex, DDRGK1 tethers the complex to the endoplasmic reticulum membrane to restrict its activity to endoplasmic reticulum-docked ribosomes and acts as an ufmylation 'reader': following RPL26/uL24 ufmylation, DDRGK1 specifically binds to ufmylated RPL26/uL24 via its UFIM motif, resulting in stable association between the 60S ribosome and the UREL complex, followed by dissociation of the 60S ribosome subunit from the endoplasmic reticulum membrane. The UREL complex is also involved in reticulophagy in response to endoplasmic reticulum stress by promoting ufmylation of proteins such as CYB5R3 and RPN1, thereby promoting lysosomal degradation of ufmylated proteins. Ufmylation-dependent reticulophagy inhibits the unfolded protein response (UPR) by regulating ERN1/IRE1-alpha stability. Acts as a regulator of immunity by promoting differentiation of B-cells into plasma cells: acts by promoting expansion of the endoplasmic reticulum and regulating the unfolded protein response (UPR). May also be required for TRIP4 ufmylation. May play a role in NF-kappa-B-mediated transcription through regulation of the phosphorylation and the degradation of NFKBIA, the inhibitor of NF-kappa-B. Plays a role in cartilage development through SOX9, inhibiting the ubiquitin-mediated proteasomal degradation of this transcriptional regulator. Required for stabilization and ufmylation of ATG9A. In Bos taurus (Bovine), this protein is DDRGK domain-containing protein 1.